Reading from the N-terminus, the 185-residue chain is Ubiquitin-conjugating enzyme E2 5 (185 aa).

Positions 1 to 148 constitute a UBC core domain; that stretch reads MSSPSKRREM…VKEYCEKYAK (148 aa). The Glycyl thioester intermediate role is filled by Cys85. The disordered stretch occupies residues 146-185; it reads YAKPRADTEEMSSDDEMSEDEYASDGDDEDDVAIAGKLDP. The span at 154 to 177 shows a compositional bias: acidic residues; the sequence is EEMSSDDEMSEDEYASDGDDEDDV.

The protein belongs to the ubiquitin-conjugating enzyme family. As to expression, expressed in developing ovules, but not in vascular tissues.

It carries out the reaction S-ubiquitinyl-[E1 ubiquitin-activating enzyme]-L-cysteine + [E2 ubiquitin-conjugating enzyme]-L-cysteine = [E1 ubiquitin-activating enzyme]-L-cysteine + S-ubiquitinyl-[E2 ubiquitin-conjugating enzyme]-L-cysteine.. The protein operates within protein modification; protein ubiquitination. Its function is as follows. Accepts the ubiquitin from the E1 complex and catalyzes its covalent attachment to other proteins. This Arabidopsis thaliana (Mouse-ear cress) protein is Ubiquitin-conjugating enzyme E2 5 (UBC5).